A 118-amino-acid chain; its full sequence is Holo-[acyl-carrier-protein] synthase (118 aa).

Mg(2+)-binding residues include Asp-8 and Glu-58.

Belongs to the P-Pant transferase superfamily. AcpS family. It depends on Mg(2+) as a cofactor.

The protein resides in the cytoplasm. It carries out the reaction apo-[ACP] + CoA = holo-[ACP] + adenosine 3',5'-bisphosphate + H(+). In terms of biological role, transfers the 4'-phosphopantetheine moiety from coenzyme A to a Ser of acyl-carrier-protein. The chain is Holo-[acyl-carrier-protein] synthase from Streptococcus equi subsp. zooepidemicus (strain H70).